The sequence spans 140 residues: Putative pre-16S rRNA nuclease (140 aa).

It belongs to the YqgF nuclease family.

The protein localises to the cytoplasm. Could be a nuclease involved in processing of the 5'-end of pre-16S rRNA. The polypeptide is Putative pre-16S rRNA nuclease (Vibrio vulnificus (strain CMCP6)).